A 227-amino-acid chain; its full sequence is Peroxisomal membrane protein 11B (227 aa).

Topologically, residues 1-85 (MSLDTVDKLV…RNPGATPMIR (85 aa)) are cytoplasmic. A helical transmembrane segment spans residues 86–106 (FLAVLANSGEMVYFFFDHFLW). The Lumenal segment spans residues 107 to 201 (LSRIGSIDAK…IALAEIHPNP (95 aa)). A helical transmembrane segment spans residues 202–222 (FCNHTITLGISGLVSAWAGWY). Over 223–227 (RNWPS) the chain is Cytoplasmic.

Belongs to the peroxin-11 family. Homooligomer. Interacts with ARC5 and FIS1B on peroxisomes. Expressed in roots, leaves and developing siliques.

It is found in the peroxisome membrane. Involved in peroxisomal proliferation. Promotes peroxisomal duplication, aggregation or elongation without fission. The sequence is that of Peroxisomal membrane protein 11B (PEX11B) from Arabidopsis thaliana (Mouse-ear cress).